The chain runs to 593 residues: Uroporphyrinogen-III C-methyltransferase (593 aa).

The tract at residues 278–303 is disordered; sequence ETSSSPNKKTKQETVTEGVVPPTDEN.

This sequence belongs to the precorrin methyltransferase family.

It catalyses the reaction uroporphyrinogen III + 2 S-adenosyl-L-methionine = precorrin-2 + 2 S-adenosyl-L-homocysteine + H(+). Functionally, siroheme synthase involved in methionine biosynthesis. This Saccharomyces cerevisiae (strain ATCC 204508 / S288c) (Baker's yeast) protein is Uroporphyrinogen-III C-methyltransferase.